Consider the following 370-residue polypeptide: Ornithine carbamoyltransferase, mitochondrial (370 aa).

The transit peptide at 1-38 directs the protein to the mitochondrion; the sequence is MPSPLRTAPQPPLRAFHNPPALRRLYSSTSHSAATPAT. Carbamoyl phosphate-binding positions include 97-100, Arg-148, His-175, and Gln-178; that span reads STRT. Asn-216, Asp-282, Ser-286, and Met-287 together coordinate L-ornithine. The active-site Proton acceptor is Cys-324. Carbamoyl phosphate contacts are provided by residues 324–325 and Arg-351; that span reads CL.

It belongs to the aspartate/ornithine carbamoyltransferase superfamily. OTCase family. As to quaternary structure, homotrimer.

It is found in the mitochondrion matrix. It carries out the reaction carbamoyl phosphate + L-ornithine = L-citrulline + phosphate + H(+). It functions in the pathway amino-acid biosynthesis; L-arginine biosynthesis; L-arginine from L-ornithine and carbamoyl phosphate: step 1/3. The polypeptide is Ornithine carbamoyltransferase, mitochondrial (argB) (Aspergillus niger).